A 637-amino-acid chain; its full sequence is Phospholipase B (637 aa).

The first 19 residues, 1-19, serve as a signal peptide directing secretion; sequence MSIATATFAFSLFATIAFA. Residues 46 to 572 form the PLA2c domain; that stretch reads DCPSNVTWIR…DTWCWAGDDN (527 aa). 17 N-linked (GlcNAc...) asparagine glycosylation sites follow: N50, N56, N122, N231, N246, N272, N314, N343, N387, N433, N481, N501, N528, N553, N572, N594, and N606.

Belongs to the lysophospholipase family. N-glycosylated.

The protein localises to the secreted. Its subcellular location is the cell membrane. It carries out the reaction a 1-acyl-sn-glycero-3-phosphocholine + H2O = sn-glycerol 3-phosphocholine + a fatty acid + H(+). Its activity is regulated as follows. Inhibited by Fe(3+) ion. Its function is as follows. Exhibits phospholipase B (PLB), lysophospholipase (LPL) and lysophospholipase/transacylase (LPTA) activities. This chain is Phospholipase B (PLB1), found in Cryptococcus neoformans var. grubii serotype A (strain H99 / ATCC 208821 / CBS 10515 / FGSC 9487) (Filobasidiella neoformans var. grubii).